The primary structure comprises 217 residues: Ras-related protein RABA1f (217 aa).

20–27 (GDSGVGKS) serves as a coordination point for GTP. The Effector region motif lies at 42–50 (SKSTIGVEF). Residues 68-72 (DTAGQ), 126-129 (NKAD), and 156-157 (SA) contribute to the GTP site. 2 S-geranylgeranyl cysteine lipidation sites follow: C214 and C215.

The protein belongs to the small GTPase superfamily. Rab family.

The protein localises to the cell membrane. Intracellular vesicle trafficking and protein transport. This chain is Ras-related protein RABA1f (RABA1F), found in Arabidopsis thaliana (Mouse-ear cress).